Reading from the N-terminus, the 195-residue chain is Dihydroneopterin triphosphate diphosphatase (195 aa).

Aspartate 73 functions as the Proton acceptor in the catalytic mechanism.

The protein belongs to the HAM1 NTPase family. Requires Mn(2+) as cofactor.

It carries out the reaction 7,8-dihydroneopterin 3'-triphosphate + H2O = 7,8-dihydroneopterin 3'-phosphate + diphosphate + H(+). It functions in the pathway cofactor biosynthesis; tetrahydrofolate biosynthesis. Its function is as follows. Pyrophosphatase involved in the biosynthesis of tetrahydrofolate. Catalyzes the hydrolysis of dihydroneopterin triphosphate (DHNTP) to dihydroneopterin monophosphate (DHNMP) and pyrophosphate. Shows a strict substrate specificity. Has only weak activity with GTP, ITP, XTP and dTTP, and cannot use ATP, UTP, CTP, NAD(+), NADH, diadenosine triphosphate, diadenosine tetraphosphate, ADP-ribose and UDP-glucose. The protein is Dihydroneopterin triphosphate diphosphatase of Limosilactobacillus reuteri (strain DSM 20016) (Lactobacillus reuteri).